The following is a 63-amino-acid chain: Prokaryotic ubiquitin-like protein Pup 1 (63 aa).

Composition is skewed to basic and acidic residues over residues 1–12 and 24–33; these read MSQEKVQRHGGG and GQERREKLGE. Residues 1 to 35 form a disordered region; the sequence is MSQEKVQRHGGGDGEEESGPEAAGQERREKLGEDV. The segment at 20–57 is ARC ATPase binding; the sequence is PEAAGQERREKLGEDVDAILDEIDDVLEENAEDFVRAY. A coiled-coil region spans residues 25-51; the sequence is QERREKLGEDVDAILDEIDDVLEENAE. The residue at position 63 (glutamine 63) is a Deamidated glutamine. Residue glutamine 63 forms an Isoglutamyl lysine isopeptide (Gln-Lys) (interchain with K-? in acceptor proteins) linkage.

This sequence belongs to the prokaryotic ubiquitin-like protein family. As to quaternary structure, strongly interacts with the proteasome-associated ATPase ARC through a hydrophobic interface; the interacting region of Pup lies in its C-terminal half. There is one Pup binding site per ARC hexamer ring. Is modified by deamidation of its C-terminal glutamine to glutamate by the deamidase Dop, a prerequisite to the subsequent pupylation process.

The protein operates within protein degradation; proteasomal Pup-dependent pathway. Protein modifier that is covalently attached to lysine residues of substrate proteins, thereby targeting them for proteasomal degradation. The tagging system is termed pupylation. This chain is Prokaryotic ubiquitin-like protein Pup 1, found in Saccharopolyspora erythraea (strain ATCC 11635 / DSM 40517 / JCM 4748 / NBRC 13426 / NCIMB 8594 / NRRL 2338).